The primary structure comprises 338 residues: Glyceraldehyde-3-phosphate dehydrogenase 2 (338 aa).

NAD(+) contacts are provided by residues 12-13 (RI), Asp-34, and Arg-79. Residues 150-152 (SCT), Thr-181, 210-211 (TG), and Arg-233 contribute to the D-glyceraldehyde 3-phosphate site. Cys-151 (nucleophile) is an active-site residue. Asn-315 contributes to the NAD(+) binding site.

The protein belongs to the glyceraldehyde-3-phosphate dehydrogenase family. Homotetramer.

Its subcellular location is the cytoplasm. The catalysed reaction is D-glyceraldehyde 3-phosphate + phosphate + NAD(+) = (2R)-3-phospho-glyceroyl phosphate + NADH + H(+). The protein operates within carbohydrate degradation; glycolysis; pyruvate from D-glyceraldehyde 3-phosphate: step 1/5. This is Glyceraldehyde-3-phosphate dehydrogenase 2 (GPD2) from Mucor circinelloides f. lusitanicus (Mucor racemosus var. lusitanicus).